A 128-amino-acid chain; its full sequence is Small ribosomal subunit protein uS9c (128 aa).

Positions 106-128 (SRIKERKKYGLKKARKAPQFSKR) are disordered. Over residues 109–128 (KERKKYGLKKARKAPQFSKR) the composition is skewed to basic residues.

The protein belongs to the universal ribosomal protein uS9 family.

Its subcellular location is the plastid. It localises to the chloroplast. In Cyanidium caldarium (Red alga), this protein is Small ribosomal subunit protein uS9c (rps9).